The chain runs to 64 residues: Large ribosomal subunit protein uL29 (64 aa).

The protein belongs to the universal ribosomal protein uL29 family.

This is Large ribosomal subunit protein uL29 from Porphyromonas gingivalis (strain ATCC 33277 / DSM 20709 / CIP 103683 / JCM 12257 / NCTC 11834 / 2561).